Here is a 73-residue protein sequence, read N- to C-terminus: Small ribosomal subunit protein bS18 (73 aa).

It belongs to the bacterial ribosomal protein bS18 family. Part of the 30S ribosomal subunit. Forms a tight heterodimer with protein bS6.

Functionally, binds as a heterodimer with protein bS6 to the central domain of the 16S rRNA, where it helps stabilize the platform of the 30S subunit. This is Small ribosomal subunit protein bS18 from Neorickettsia sennetsu (strain ATCC VR-367 / Miyayama) (Ehrlichia sennetsu).